We begin with the raw amino-acid sequence, 660 residues long: Sodium/nucleoside cotransporter 2 (660 aa).

Phosphoserine is present on Ser-46. The next 14 helical transmembrane spans lie at 82–102 (ILLG…CILN), 106–125 (ALAL…CHFL), 150–168 (KRVF…LALD), 174–194 (EQLI…ACSK), 202–222 (RTVF…IRTE), 235–255 (IQIF…DTLV), 262–282 (QSLP…YLGL), 297–316 (TMGT…FVGM), 338–357 (VMTG…FISF), 364–383 (LISA…KLVY), 425–445 (VAAN…TLSW), 456–476 (SFQV…GVQW), 531–551 (TTFS…LGGL), and 569–589 (ALFT…ILYV).

It belongs to the concentrative nucleoside transporter (CNT) (TC 2.A.41) family.

Its subcellular location is the membrane. The protein localises to the apicolateral cell membrane. The catalysed reaction is adenosine(out) + Na(+)(out) = adenosine(in) + Na(+)(in). It catalyses the reaction inosine(out) + Na(+)(out) = inosine(in) + Na(+)(in). It carries out the reaction guanosine(out) + Na(+)(out) = guanosine(in) + Na(+)(in). The enzyme catalyses uridine(out) + Na(+)(out) = uridine(in) + Na(+)(in). Sodium-dependent and purine-selective transporter. Exhibits the transport characteristics of the nucleoside transport system cif or N1 subtype (N1/cif) (selective for purine nucleosides and uridine). Plays a critical role in specific uptake and salvage of purine nucleosides in kidney and other tissues. May contribute to regulate the transport of organic compounds in testes across the blood-testis-barrier. This Mus musculus (Mouse) protein is Sodium/nucleoside cotransporter 2 (Slc28a2).